The primary structure comprises 101 residues: Apolipoprotein C-II (101 aa).

An N-terminal signal peptide occupies residues 1–22 (MGTRFLLALFLVLLVLGFEVQG). Positions 66–74 (AVDEKLRDM) are lipid binding. The lipoprotein lipase cofactor stretch occupies residues 78–101 (STAAVSTYAGIFTDQVLSMLRGEE).

Belongs to the apolipoprotein C2 family. In terms of processing, proapolipoprotein C-II is synthesized as a sialic acid containing glycoprotein which is subsequently desialylated prior to its proteolytic processing. Proapolipoprotein C-II, the major form found in plasma undergoes proteolytic cleavage of its N-terminal hexapeptide to generate apolipoprotein C-II, which occurs as the minor form in plasma.

Its subcellular location is the secreted. Functionally, component of chylomicrons, very low-density lipoproteins (VLDL), low-density lipoproteins (LDL), and high-density lipoproteins (HDL) in plasma. Plays an important role in lipoprotein metabolism as an activator of lipoprotein lipase. Both proapolipoprotein C-II and apolipoprotein C-II can activate lipoprotein lipase. The chain is Apolipoprotein C-II (APOC2) from Saimiri boliviensis boliviensis (Bolivian squirrel monkey).